A 226-amino-acid chain; its full sequence is SPI-1 type 3 secretion system stator protein (226 aa).

As to quaternary structure, the core secretion machinery of the T3SS is composed of approximately 20 different proteins, including cytoplasmic components, a base, an export apparatus and a needle. This subunit is part of the cytosolic complex. Interacts directly with InvC/SctN1 (T3SS-1 ATPase) and SpaO/SctQ (the major sorting platform component).

The protein localises to the cytoplasm. Its function is as follows. Component of the type III secretion system (T3SS), also called injectisome, which is used to inject bacterial effector proteins into eukaryotic host cells. Acts as a regulator of the InvC/SctN1 ATPase activity. Required for invasion and secretion. The protein is SPI-1 type 3 secretion system stator protein of Salmonella typhimurium (strain SL1344).